Consider the following 319-residue polypeptide: ATP-dependent 6-phosphofructokinase (319 aa).

Position 11 (Gly11) interacts with ATP. Residue 21 to 25 (RAVVR) coordinates ADP. ATP contacts are provided by residues 72–73 (RY) and 102–105 (GDGS). Asp103 lines the Mg(2+) pocket. 125-127 (TID) serves as a coordination point for substrate. Asp127 (proton acceptor) is an active-site residue. Arg154 serves as a coordination point for ADP. Residues Arg162 and 169–171 (MGR) contribute to the substrate site. ADP-binding positions include 185–187 (GAE), Arg211, and 213–215 (KKH). Residues Glu222, Arg243, and 249–252 (HVQR) contribute to the substrate site.

Belongs to the phosphofructokinase type A (PFKA) family. ATP-dependent PFK group I subfamily. Prokaryotic clade 'B1' sub-subfamily. As to quaternary structure, homotetramer. Requires Mg(2+) as cofactor.

The protein localises to the cytoplasm. The enzyme catalyses beta-D-fructose 6-phosphate + ATP = beta-D-fructose 1,6-bisphosphate + ADP + H(+). It functions in the pathway carbohydrate degradation; glycolysis; D-glyceraldehyde 3-phosphate and glycerone phosphate from D-glucose: step 3/4. Its activity is regulated as follows. Allosterically activated by ADP and other diphosphonucleosides, and allosterically inhibited by phosphoenolpyruvate. Its function is as follows. Catalyzes the phosphorylation of D-fructose 6-phosphate to fructose 1,6-bisphosphate by ATP, the first committing step of glycolysis. The protein is ATP-dependent 6-phosphofructokinase of Listeria innocua serovar 6a (strain ATCC BAA-680 / CLIP 11262).